A 335-amino-acid polypeptide reads, in one-letter code: Biotin synthase (335 aa).

In terms of domain architecture, Radical SAM core spans 43-269 (YFGKKVKLNM…INPTKEIRIA (227 aa)). [4Fe-4S] cluster-binding residues include Cys61, Cys65, and Cys68. [2Fe-2S] cluster contacts are provided by Cys104, Cys137, Cys197, and Arg267.

This sequence belongs to the radical SAM superfamily. Biotin synthase family. In terms of assembly, homodimer. [4Fe-4S] cluster is required as a cofactor. Requires [2Fe-2S] cluster as cofactor.

It carries out the reaction (4R,5S)-dethiobiotin + (sulfur carrier)-SH + 2 reduced [2Fe-2S]-[ferredoxin] + 2 S-adenosyl-L-methionine = (sulfur carrier)-H + biotin + 2 5'-deoxyadenosine + 2 L-methionine + 2 oxidized [2Fe-2S]-[ferredoxin]. It participates in cofactor biosynthesis; biotin biosynthesis; biotin from 7,8-diaminononanoate: step 2/2. Functionally, catalyzes the conversion of dethiobiotin (DTB) to biotin by the insertion of a sulfur atom into dethiobiotin via a radical-based mechanism. The polypeptide is Biotin synthase (Staphylococcus aureus (strain MSSA476)).